A 222-amino-acid polypeptide reads, in one-letter code: Histidine biosynthesis bifunctional protein HisIE (222 aa).

The phosphoribosyl-AMP cyclohydrolase stretch occupies residues 1–128 (MQPLSPAFID…SNALSPPADA (128 aa)). Residues 129–222 (CTELFRVIES…AARRGAPRRH (94 aa)) form a phosphoribosyl-ATP pyrophosphohydrolase region.

It in the N-terminal section; belongs to the PRA-CH family. In the C-terminal section; belongs to the PRA-PH family.

It is found in the cytoplasm. The catalysed reaction is 1-(5-phospho-beta-D-ribosyl)-ATP + H2O = 1-(5-phospho-beta-D-ribosyl)-5'-AMP + diphosphate + H(+). The enzyme catalyses 1-(5-phospho-beta-D-ribosyl)-5'-AMP + H2O = 1-(5-phospho-beta-D-ribosyl)-5-[(5-phospho-beta-D-ribosylamino)methylideneamino]imidazole-4-carboxamide. It functions in the pathway amino-acid biosynthesis; L-histidine biosynthesis; L-histidine from 5-phospho-alpha-D-ribose 1-diphosphate: step 2/9. It participates in amino-acid biosynthesis; L-histidine biosynthesis; L-histidine from 5-phospho-alpha-D-ribose 1-diphosphate: step 3/9. The protein is Histidine biosynthesis bifunctional protein HisIE of Parasynechococcus marenigrum (strain WH8102).